The primary structure comprises 136 residues: uncharacterized protein (136 aa).

The protein localises to the mitochondrion. This is an uncharacterized protein from Arabidopsis thaliana (Mouse-ear cress).